A 471-amino-acid chain; its full sequence is Tetratricopeptide repeat protein 29 (471 aa).

TPR repeat units lie at residues 92 to 131 (DKLREAAQARSLFWLQRPLEDQPDKLDNFYHYLTKAEAAE), 136 to 173 (YEEVYNNLYALACYFDNSEDKWVRNHFYERCFKIAQLI), 182 to 215 (AEAEAHMGLLYEEEGELLKAAEHYEAFHELTQGR), 234 to 267 (VRTYRLLSDRMLQNRDYKQAIKILIKASEIAREG), 274 to 307 (GEASYYLGLAHLASGEYETALSVLDRYSEISTSL), 314 to 347 (GRAYEAMAKVLQSQGEMTEAIKYLEKFVVIARNN), and 354 to 387 (IQACTMLGDIYNEKGQYNKASDYFQQAFSTAMEV).

It is found in the cytoplasm. The protein resides in the cytoskeleton. Its subcellular location is the flagellum axoneme. Axonemal protein which is implicated in axonemal and/or peri-axonemal structure assembly and regulates flagellum assembly and beating and therefore sperm motility. This is Tetratricopeptide repeat protein 29 (Ttc29) from Rattus norvegicus (Rat).